The following is a 133-amino-acid chain: Salivary cystatin-L (133 aa).

The signal sequence occupies residues 1–19; sequence MTSSFALVLLLGGVAVCVA. The Cystatin domain maps to 30-117; that stretch reads ANHQANPEFL…HRTCTTVVFE (88 aa). Intrachain disulfides connect C89–C100 and C111–C130.

It belongs to the cystatin family. As to quaternary structure, monomer. Can form homodimers in vitro, but probably not in vivo. Homodimers are predicted to be inactive; dimerization disrupts the interaction with target proteases.

The protein resides in the secreted. Functionally, inhibitor of cysteine proteinases. Inhibits host immune responses via its inhibition of host cathepsins. Contributes to the suppression of the host's immune response to tick salivary proteins and is important for successful feeding on hosts. Inhibits differentiation of host dendritic cells. Inhibits proliferation of host T-cells in response to antigen stimulus. Down-regulates TLR2-mediated host responses to infection by B.burgdorferi and the production of the chemokine CCL3 by host dendritic cells. Down-regulates host responses to infection by B.burgdorferi and the production of IFNB1 by host dendritic cells. Down-regulates IL1B production by host mast cells, and this then leads to impaired activation of IL1R1, resulting in decreased IL9 production. Inhibits host inflammatory reactions and recruitment of host neutrophils. Inhibits papain and cathepsin L (CTSL) (in vitro). Inhibits cathepsin S (CTSS) (in vitro). Inhibits CTSV and CTSC, but to a lesser degree (in vitro). The protein is Salivary cystatin-L of Ixodes scapularis (Black-legged tick).